The following is an 89-amino-acid chain: MAHKKGTGSTRNGRDSNAKRLGVKCFGGELVHPGYILVRQRGTKFHPGVNVRRGGDDTLFAVATGIVTFERYGKWRKKVSVYPVEAAAQ.

Belongs to the bacterial ribosomal protein bL27 family.

This is Large ribosomal subunit protein bL27 from Synechococcus sp. (strain JA-3-3Ab) (Cyanobacteria bacterium Yellowstone A-Prime).